A 151-amino-acid chain; its full sequence is 3-hydroxyacyl-[acyl-carrier-protein] dehydratase FabZ (151 aa).

Residue His-54 is part of the active site.

The protein belongs to the thioester dehydratase family. FabZ subfamily.

The protein resides in the cytoplasm. It catalyses the reaction a (3R)-hydroxyacyl-[ACP] = a (2E)-enoyl-[ACP] + H2O. In terms of biological role, involved in unsaturated fatty acids biosynthesis. Catalyzes the dehydration of short chain beta-hydroxyacyl-ACPs and long chain saturated and unsaturated beta-hydroxyacyl-ACPs. This chain is 3-hydroxyacyl-[acyl-carrier-protein] dehydratase FabZ, found in Klebsiella pneumoniae (strain 342).